The following is a 310-amino-acid chain: Probable deoxyhypusine synthase (310 aa).

The Nucleophile role is filled by lysine 284.

It belongs to the deoxyhypusine synthase family. It depends on NAD(+) as a cofactor.

It catalyses the reaction [eIF5A protein]-L-lysine + spermidine = [eIF5A protein]-deoxyhypusine + propane-1,3-diamine. It participates in protein modification; eIF5A hypusination. Functionally, catalyzes the NAD-dependent oxidative cleavage of spermidine and the subsequent transfer of the butylamine moiety of spermidine to the epsilon-amino group of a specific lysine residue of the eIF-5A precursor protein to form the intermediate deoxyhypusine residue. The chain is Probable deoxyhypusine synthase (dys) from Thermoplasma acidophilum (strain ATCC 25905 / DSM 1728 / JCM 9062 / NBRC 15155 / AMRC-C165).